The primary structure comprises 518 residues: UPF0288 protein Mbar_A0706 (518 aa).

The protein belongs to the UPF0288 family.

This chain is UPF0288 protein Mbar_A0706, found in Methanosarcina barkeri (strain Fusaro / DSM 804).